A 1218-amino-acid polypeptide reads, in one-letter code: Coatomer subunit alpha-2 (1218 aa).

WD repeat units lie at residues 7–48 (TKSN…DRFD), 49–88 (EHEGPVRGVHFHNSQPLFVSGGDDYKIKVWNYKTHRCLFT), 91–132 (GHLD…SVLT), 133–172 (GHNHYVMCASFHPKEDLVVSASLDQTVRVWDIGALKKKSA), 202–241 (GHDRGVNWASFHPTLPLIVSGADDRQVKLWRMNETKAWEV), 246–285 (GHMNNVSSVMFHAKQDIIVSNSEDKSIRVWDATKRTGIQT), 288–326 (REHDRFWILAVHPEINLLAAGHDNGMIVFKLERERPAFA), and 363–404 (SLNQ…VGRS). Residues 826-849 (NRGAVDEEEEDVEGDWGEGLDKFD) are disordered. Positions 831–843 (DEEEEDVEGDWGE) are enriched in acidic residues.

Oligomeric complex that consists of at least the alpha, beta, beta', gamma, delta, epsilon and zeta subunits.

It is found in the cytoplasm. The protein localises to the golgi apparatus membrane. Its subcellular location is the cytoplasmic vesicle. It localises to the COPI-coated vesicle membrane. The coatomer is a cytosolic protein complex that binds to dilysine motifs and reversibly associates with Golgi non-clathrin-coated vesicles, which further mediate biosynthetic protein transport from the ER, via the Golgi up to the trans Golgi network. Coatomer complex is required for budding from Golgi membranes, and is essential for the retrograde Golgi-to-ER transport of dilysine-tagged proteins. The chain is Coatomer subunit alpha-2 from Arabidopsis thaliana (Mouse-ear cress).